The sequence spans 673 residues: uncharacterized protein (673 aa).

Over 1-208 (MSTHSNDYFS…STGQLELPPD (208 aa)) the chain is Cytoplasmic. A phosphoserine mark is found at serine 57, serine 112, and serine 172. The chain crosses the membrane as a helical span at residues 209–229 (GGYGWVVTFCVFLTMFSTWGC). N-linked (GlcNAc...) asparagine glycosylation is present at asparagine 230. The Lumenal segment spans residues 230-255 (NASFGVDLAYYLNHDTYPGASKYDYA). Residues 256–276 (LIAGLTVFLGQLLSPLVMALM) form a helical membrane-spanning segment. Residue arginine 277 is a topological domain, cytoplasmic. The chain crosses the membrane as a helical span at residues 278–298 (IIGLRTTMLFGDAVMLAAYLL). The Lumenal segment spans residues 299 to 315 (ASFTTKLWQLYVTQGFM). The chain crosses the membrane as a helical span at residues 316–336 (VGCSISLIFVPATTVLPGWFL). At 337–339 (KKR) the chain is on the cytoplasmic side. Residues 340 to 360 (AVAMGVSLLGTGAGGVVYGLA) traverse the membrane as a helical segment. Over 361–372 (TNKMLSDFGNTR) the chain is Lumenal. The chain crosses the membrane as a helical span at residues 373 to 393 (WCLRIIGISCSISVLVAIALL). Residues 394-426 (KERNPTPAIGLKSPRAMFEQLKAMFSLKVITKP) are Cytoplasmic-facing. A helical transmembrane segment spans residues 427-447 (FVVLIALWFMFALFAYNMMVF). At 448-504 (TLSSYAISKGLSSHDASTLTAILNGSQSIGRPLMGLAGDKFGRANVTIVLTTLLTIY) the chain is on the lumenal side. Residues asparagine 471 and asparagine 492 are each glycosylated (N-linked (GlcNAc...) asparagine). Residues 505–525 (MFAFWIPAHTFVQLIFFSILV) traverse the membrane as a helical segment. The Cytoplasmic segment spans residues 526 to 549 (GSCVGVANVMNTVLIADMVKPEEF). The chain crosses the membrane as a helical span at residues 550 to 570 (LPAWAFVNYCGAPFLLVCEVI). Residues 571–584 (AQALTVEKDKSNPY) lie on the Lumenal side of the membrane. A helical transmembrane segment spans residues 585-605 (LHAQIFCGCCFIAALILISIL). Residues 606–673 (REYSIRMKLT…FLRMVYPMKV (68 aa)) are Cytoplasmic-facing. Serine 637 is subject to Phosphoserine.

The protein belongs to the major facilitator superfamily. Monocarboxylate porter (TC 2.A.1.13) family.

It localises to the endoplasmic reticulum membrane. This is an uncharacterized protein from Saccharomyces cerevisiae (strain ATCC 204508 / S288c) (Baker's yeast).